A 777-amino-acid chain; its full sequence is Nuclear autoantigenic sperm protein (777 aa).

N-acetylalanine is present on Ala2. Lys34 bears the N6-acetyllysine mark. A TPR 1 repeat occupies 44–77 (AKKLLGLGQKHLVMGDIPAAVNAFQEAASLLGKK). The interval 117–128 (EEEEGEKTEEES) is histone-binding. The residue at position 124 (Thr124) is a Phosphothreonine. Ser128 carries the post-translational modification Phosphoserine. 3 stretches are compositionally biased toward basic and acidic residues: residues 152-186 (MGEKEAQKTEDKSLVKPEMDKEQETEMEKGGREDM), 227-259 (VTSKKPDQEIPGAEEGKSVSETDVQEECREKGG), and 267-276 (IEEKPKEASK). Residues 152-496 (MGEKEAQKTE…ALENKSLQEN (345 aa)) form a disordered region. Residues 211–244 (EEGKGAAAPEGLSEAEVTSKKPDQEIPGAEEGKS) are histone-binding. An N6-acetyllysine modification is found at Lys243. Ser244 carries the phosphoserine modification. N6-acetyllysine is present on Lys285. Basic and acidic residues predominate over residues 303 to 319 (DEPKEQVAASESERGKA). At Ser312 the chain carries Phosphoserine. Over residues 342 to 353 (AADASAAEAGSE) the composition is skewed to low complexity. Residues Ser399, Ser411, and Ser440 each carry the phosphoserine modification. The histone-binding stretch occupies residues 458-501 (EQMKEGEETEGSEEEDKENDKAEETLNDSALENKSLQENEEEEI). Residues 464–474 (EETEGSEEEDK) show a composition bias toward acidic residues. Position 466 is a phosphothreonine (Thr466). A phosphoserine mark is found at Ser469, Ser486, and Ser492. Over residues 484-493 (NDSALENKSL) the composition is skewed to polar residues. 2 TPR repeats span residues 531-564 (AQAHLKLGEVSVESENYLQAVEEFQACLNLQEQY) and 573-606 (AETHYQLGLAYGYNSQYDEAVAQFSKSIEVIEKR). The stretch at 593–648 (VAQFSKSIEVIEKRMAVLNEQMKEAEGSPTEYEKEIEELKELLPEIREKIEDAKES) forms a coiled coil. Ser651 bears the Phosphoserine mark. Residues 667-681 (STSGFTPSGGSSSVS) show a composition bias toward low complexity. Positions 667-777 (STSGFTPSGG…AGATVESTAC (111 aa)) are disordered. Thr672 is modified (phosphothreonine). Phosphoserine is present on residues Ser694 and Ser695. The short motif at 705-711 (VRKKRKP) is the Nuclear localization signal element. Over residues 710–728 (KPEEESPRKDDAKKAKQEP) the composition is skewed to basic and acidic residues. The residue at position 715 (Ser715) is a Phosphoserine. Residue Lys725 forms a Glycyl lysine isopeptide (Lys-Gly) (interchain with G-Cter in SUMO1) linkage. At Ser734 the chain carries Phosphoserine.

It belongs to the NASP family. In terms of assembly, binds to linker H1 histones. Interacts with histones H2A, H2B, H3 and H4. Interacts with histone H3.3. Interacts with histones H3 and H4; NASP is a histone chaperone that stabilizes and maintains a soluble pool of histone H3-H4 dimers. Interacts with ASF1A and ASF1B; the interaction is probably indirect and mediated by H3-H4. Also binds to HSP90 in the cytoplasm. This interaction stimulates binding of NASP to H1-6/H1T.

It is found in the cytoplasm. It localises to the nucleus. Component of the histone chaperone network. Binds and stabilizes histone H3-H4 not bound to chromatin to maintain a soluble reservoir and modulate degradation by chaperone-mediated autophagy. Required for DNA replication, normal cell cycle progression and cell proliferation. Forms a cytoplasmic complex with HSP90 and H1 linker histones and stimulates HSP90 ATPase activity. NASP and H1 histone are subsequently released from the complex and translocate to the nucleus where the histone is released for binding to DNA. This is Nuclear autoantigenic sperm protein from Bos taurus (Bovine).